Reading from the N-terminus, the 387-residue chain is Eukaryotic translation initiation factor 3 subunit M (387 aa).

The region spanning 181 to 340 (LSSKVMIELL…RKVHISSTMH (160 aa)) is the PCI domain.

Belongs to the eIF-3 subunit M family. Component of the eukaryotic translation initiation factor 3 (eIF-3) complex. The eIF-3 complex interacts with pix.

It is found in the cytoplasm. The protein localises to the golgi apparatus. Its function is as follows. Component of the eukaryotic translation initiation factor 3 (eIF-3) complex, which is involved in protein synthesis of a specialized repertoire of mRNAs and, together with other initiation factors, stimulates binding of mRNA and methionyl-tRNAi to the 40S ribosome. The eIF-3 complex specifically targets and initiates translation of a subset of mRNAs involved in cell proliferation. This is Eukaryotic translation initiation factor 3 subunit M from Drosophila pseudoobscura pseudoobscura (Fruit fly).